Reading from the N-terminus, the 446-residue chain is GTPase Der (446 aa).

EngA-type G domains are found at residues 2-166 and 179-354; these read TVVA…PEAP and IRVS…RQYN. Residues 8-15, 55-59, 118-121, 185-192, 232-236, and 297-300 contribute to the GTP site; these read GRPNVGKS, DTAGF, NKID, DTAGI, and NKWD. The region spanning 355 to 440 is the KH-like domain; the sequence is QRVTTGIVNR…PIRLIFRPRQ (86 aa).

The protein belongs to the TRAFAC class TrmE-Era-EngA-EngB-Septin-like GTPase superfamily. EngA (Der) GTPase family. In terms of assembly, associates with the 50S ribosomal subunit.

In terms of biological role, GTPase that plays an essential role in the late steps of ribosome biogenesis. This is GTPase Der from Syntrophobacter fumaroxidans (strain DSM 10017 / MPOB).